Consider the following 395-residue polypeptide: Succinyl-diaminopimelate desuccinylase 2 (395 aa).

H79 contacts Zn(2+). The active site involves D81. D112 is a binding site for Zn(2+). Catalysis depends on E145, which acts as the Proton acceptor. Residues E146, E174, and H363 each contribute to the Zn(2+) site.

This sequence belongs to the peptidase M20A family. DapE subfamily. Homodimer. The cofactor is Zn(2+). Co(2+) is required as a cofactor.

It carries out the reaction N-succinyl-(2S,6S)-2,6-diaminopimelate + H2O = (2S,6S)-2,6-diaminopimelate + succinate. It participates in amino-acid biosynthesis; L-lysine biosynthesis via DAP pathway; LL-2,6-diaminopimelate from (S)-tetrahydrodipicolinate (succinylase route): step 3/3. In terms of biological role, catalyzes the hydrolysis of N-succinyl-L,L-diaminopimelic acid (SDAP), forming succinate and LL-2,6-diaminopimelate (DAP), an intermediate involved in the bacterial biosynthesis of lysine and meso-diaminopimelic acid, an essential component of bacterial cell walls. The protein is Succinyl-diaminopimelate desuccinylase 2 of Ruegeria sp. (strain TM1040) (Silicibacter sp.).